Consider the following 277-residue polypeptide: Shikimate dehydrogenase (NADP(+)) (277 aa).

Shikimate is bound by residues serine 15–serine 17 and threonine 62. Residue lysine 66 is the Proton acceptor of the active site. Asparagine 87 and aspartate 102 together coordinate shikimate. Residues glycine 127–alanine 131, asparagine 151–lysine 156, and isoleucine 219 contribute to the NADP(+) site. Tyrosine 221 contacts shikimate. Residue glycine 242 participates in NADP(+) binding.

This sequence belongs to the shikimate dehydrogenase family. In terms of assembly, homodimer.

It catalyses the reaction shikimate + NADP(+) = 3-dehydroshikimate + NADPH + H(+). The protein operates within metabolic intermediate biosynthesis; chorismate biosynthesis; chorismate from D-erythrose 4-phosphate and phosphoenolpyruvate: step 4/7. In terms of biological role, involved in the biosynthesis of the chorismate, which leads to the biosynthesis of aromatic amino acids. Catalyzes the reversible NADPH linked reduction of 3-dehydroshikimate (DHSA) to yield shikimate (SA). This Bacillus thuringiensis subsp. konkukian (strain 97-27) protein is Shikimate dehydrogenase (NADP(+)).